Here is a 390-residue protein sequence, read N- to C-terminus: Aspartate beta-hydroxylase domain-containing protein 1 (390 aa).

The segment at 1–54 is disordered; the sequence is MKEGRGSFSVERGPRKERETAQSGMWKGNSPAGSQGAAMEGTGGELGGQGNWGP. Over 1 to 72 the chain is Cytoplasmic; that stretch reads MKEGRGSFSV…RASLIMLPWP (72 aa). The segment covering 41–51 has biased composition (gly residues); it reads GTGGELGGQGN. Residues 73–95 form a helical membrane-spanning segment; it reads LPLASSALTLLFGALTSLFLWYC. The Lumenal segment spans residues 96–390; that stretch reads YRLGSQDMQA…ALDFVFAPDP (295 aa). A disordered region spans residues 116 to 143; the sequence is RGGPVGCSEAGGPSPGGPGDPGEGPRTE. Residues 128–137 are compositionally biased toward gly residues; that stretch reads PSPGGPGDPG. Ser129 bears the Phosphoserine mark.

The protein belongs to the aspartyl/asparaginyl beta-hydroxylase family.

The protein localises to the membrane. This chain is Aspartate beta-hydroxylase domain-containing protein 1 (ASPHD1), found in Homo sapiens (Human).